Reading from the N-terminus, the 591-residue chain is Metalloendopeptidase OPG085 (591 aa).

His-41 is a binding site for Zn(2+). Glu-44 is an active-site residue. Positions 45 and 112 each coordinate Zn(2+).

The protein belongs to the peptidase M44 family. The cofactor is Zn(2+). Undergoes proteolytic processing during the course of infection. May be cleaved into 46 kDa and 22 kDa products (Potential).

The protein localises to the virion. Probably involved in maturation of some viral proteins by processing them preferentially at Ala-Gly-|-Ser/Thr/Lys motifs. Does not seem to be responsible for the cleavage of major core proteins. The protein is Metalloendopeptidase OPG085 (OPG085) of Homo sapiens (Human).